The sequence spans 20 residues: Brevinin-1SPb (20 aa).

Cys-14 and Cys-20 are disulfide-bonded.

In terms of tissue distribution, expressed by the skin glands.

It localises to the secreted. Antimicrobial peptide with activity against Gram-negative and Gram-positive bacteria (MIC=50 uM against E.coli, MIC=6 uM against S.aureus) and fungi (MIC=13 uM against C.albicans). Shows hemolytic activity on human erythrocytes (HC(50)=25 uM). The polypeptide is Brevinin-1SPb (Lithobates septentrionalis (Mink frog)).